The primary structure comprises 515 residues: Fatty acyl-CoA reductase 1 (515 aa).

The Cytoplasmic portion of the chain corresponds to M1–N465. A necessary and sufficient for PEX19-mediated localization into peroxisome membrane region spans residues S451 to F507. Residues I466–I483 form a helical membrane-spanning segment. Residues A484–Y515 are Peroxisomal-facing.

It belongs to the fatty acyl-CoA reductase family. As to quaternary structure, interacts with PEX19; PEX19 mediates the targeting of FAR1 to peroxisomes.

It localises to the peroxisome membrane. The catalysed reaction is a long-chain fatty acyl-CoA + 2 NADPH + 2 H(+) = a long-chain primary fatty alcohol + 2 NADP(+) + CoA. The enzyme catalyses hexadecanoyl-CoA + 2 NADPH + 2 H(+) = hexadecan-1-ol + 2 NADP(+) + CoA. It catalyses the reaction octadecanoyl-CoA + 2 NADPH + 2 H(+) = octadecan-1-ol + 2 NADP(+) + CoA. It carries out the reaction (9Z)-octadecenoyl-CoA + 2 NADPH + 2 H(+) = (9Z)-octadecen-1-ol + 2 NADP(+) + CoA. The catalysed reaction is (9Z,12Z)-octadecadienoyl-CoA + 2 NADPH + 2 H(+) = (9Z,12Z)-octadecadien-1-ol + 2 NADP(+) + CoA. The enzyme catalyses eicosanoyl-CoA + 2 NADPH + 2 H(+) = eicosan-1-ol + 2 NADP(+) + CoA. It catalyses the reaction 16-methylheptadecanoyl-CoA + 2 NADPH + 2 H(+) = 16-methylheptadecan-1-ol + 2 NADP(+) + CoA. It carries out the reaction 18-methylnonadecanoyl-CoA + 2 NADPH + 2 H(+) = 18-methylnonadecan-1-ol + 2 NADP(+) + CoA. Catalyzes the reduction of saturated and unsaturated C16 or C18 fatty acyl-CoA to fatty alcohols. It plays an essential role in the production of ether lipids/plasmalogens which synthesis requires fatty alcohols. In parallel, it is also required for wax monoesters production since fatty alcohols also constitute a substrate for their synthesis. The protein is Fatty acyl-CoA reductase 1 of Pongo abelii (Sumatran orangutan).